Here is a 210-residue protein sequence, read N- to C-terminus: HTH-type transcriptional repressor FabR (210 aa).

The 61-residue stretch at 10–70 folds into the HTH tetR-type domain; it reads KTRRSLVEAA…TMVDESGLML (61 aa). Residues 33–52 constitute a DNA-binding region (H-T-H motif); that stretch reads SLREVAREAGIAPTSFYRHF.

Homodimer.

The protein localises to the cytoplasm. In terms of biological role, represses the transcription of fabB, involved in unsaturated fatty acid (UFA) biosynthesis. By controlling UFA production, FabR directly influences the physical properties of the membrane bilayer. The chain is HTH-type transcriptional repressor FabR from Salmonella paratyphi A (strain ATCC 9150 / SARB42).